The primary structure comprises 218 residues: Uracil-DNA glycosylase (218 aa).

Asp-59 serves as the catalytic Proton acceptor.

The protein belongs to the uracil-DNA glycosylase (UDG) superfamily. UNG family.

It is found in the cytoplasm. The enzyme catalyses Hydrolyzes single-stranded DNA or mismatched double-stranded DNA and polynucleotides, releasing free uracil.. Its function is as follows. Excises uracil residues from the DNA which can arise as a result of misincorporation of dUMP residues by DNA polymerase or due to deamination of cytosine. The chain is Uracil-DNA glycosylase from Staphylococcus saprophyticus subsp. saprophyticus (strain ATCC 15305 / DSM 20229 / NCIMB 8711 / NCTC 7292 / S-41).